Consider the following 465-residue polypeptide: Gamma-aminobutyric acid receptor subunit gamma-1 (465 aa).

A signal peptide spans 1–20 (MGSGKAFLFSPSLLWSQTRG). Over 21–273 (VRLIFLLLTL…FDLSRRMGYF (253 aa)) the chain is Extracellular. 2 N-linked (GlcNAc...) asparagine glycosylation sites follow: asparagine 50 and asparagine 127. Cysteine 188 and cysteine 202 are oxidised to a cystine. Asparagine 245 carries an N-linked (GlcNAc...) asparagine glycan. A helical transmembrane segment spans residues 274–294 (TIQTYIPCILTVVLSWVSFWI). Over 295 to 300 (NKDAVP) the chain is Cytoplasmic. Residues 301 to 320 (ARTSLGITTVLTMTTLSTIA) traverse the membrane as a helical segment. Residues 321 to 328 (RKSLPKVS) are Extracellular-facing. Residues 329 to 349 (YVTAMDLFVSVCFIFVFAALM) form a helical membrane-spanning segment. Over 350–444 (EYGTLHYFTS…RIAKIDSYSR (95 aa)) the chain is Cytoplasmic. Residues 445-465 (IFFPTAFALFNLVYWVGYLYL) traverse the membrane as a helical segment.

Belongs to the ligand-gated ion channel (TC 1.A.9) family. Gamma-aminobutyric acid receptor (TC 1.A.9.5) subfamily. GABRG1 sub-subfamily. In terms of assembly, heteropentamer, formed by a combination of alpha (GABRA1-6), beta (GABRB1-3), gamma (GABRG1-3), delta (GABRD), epsilon (GABRE), rho (GABRR1-3), pi (GABRP) and theta (GABRQ) chains, each subunit exhibiting distinct physiological and pharmacological properties. May be palmitoylated. In terms of tissue distribution, expressed in brain.

Its subcellular location is the postsynaptic cell membrane. It is found in the cell membrane. The catalysed reaction is chloride(in) = chloride(out). Gamma subunit of the heteropentameric ligand-gated chloride channel gated by gamma-aminobutyric acid (GABA), a major inhibitory neurotransmitter in the brain. GABA-gated chloride channels, also named GABA(A) receptors (GABAAR), consist of five subunits arranged around a central pore and contain GABA active binding site(s) located at the alpha and beta subunit interface(s). When activated by GABA, GABAARs selectively allow the flow of chloride anions across the cell membrane down their electrochemical gradient. Chloride influx into the postsynaptic neuron following GABAAR opening decreases the neuron ability to generate a new action potential, thereby reducing nerve transmission. The protein is Gamma-aminobutyric acid receptor subunit gamma-1 of Mus musculus (Mouse).